A 65-amino-acid chain; its full sequence is U11-theraphotoxin-Cg1a (65 aa).

The first 21 residues, 1 to 21 (MKTTILLVILGLTLLFALSAA), serve as a signal peptide directing secretion. A propeptide spanning residues 22–29 (TELKDEER) is cleaved from the precursor. 3 disulfides stabilise this stretch: C31/C45, C38/C50, and C44/C57.

The protein belongs to the neurotoxin 10 (Hwtx-1) family. 32 (Jztx-16) subfamily. As to expression, expressed by the venom gland.

The protein resides in the secreted. Probable ion channel inhibitor. This chain is U11-theraphotoxin-Cg1a, found in Chilobrachys guangxiensis (Chinese earth tiger tarantula).